Reading from the N-terminus, the 346-residue chain is UDP-3-O-acylglucosamine N-acyltransferase (346 aa).

The Proton acceptor role is filled by His253.

It belongs to the transferase hexapeptide repeat family. LpxD subfamily. Homotrimer.

The catalysed reaction is a UDP-3-O-[(3R)-3-hydroxyacyl]-alpha-D-glucosamine + a (3R)-hydroxyacyl-[ACP] = a UDP-2-N,3-O-bis[(3R)-3-hydroxyacyl]-alpha-D-glucosamine + holo-[ACP] + H(+). Its pathway is bacterial outer membrane biogenesis; LPS lipid A biosynthesis. Catalyzes the N-acylation of UDP-3-O-acylglucosamine using 3-hydroxyacyl-ACP as the acyl donor. Is involved in the biosynthesis of lipid A, a phosphorylated glycolipid that anchors the lipopolysaccharide to the outer membrane of the cell. The chain is UDP-3-O-acylglucosamine N-acyltransferase from Rickettsia typhi (strain ATCC VR-144 / Wilmington).